We begin with the raw amino-acid sequence, 71 residues long: Large ribosomal subunit protein bL31 (71 aa).

Zn(2+) is bound by residues Cys-16, Cys-18, Cys-37, and Cys-40.

The protein belongs to the bacterial ribosomal protein bL31 family. Type A subfamily. As to quaternary structure, part of the 50S ribosomal subunit. Zn(2+) is required as a cofactor.

Binds the 23S rRNA. This Wigglesworthia glossinidia brevipalpis protein is Large ribosomal subunit protein bL31.